The primary structure comprises 220 residues: Probable nicotinate-nucleotide adenylyltransferase (220 aa).

This sequence belongs to the NadD family.

The catalysed reaction is nicotinate beta-D-ribonucleotide + ATP + H(+) = deamido-NAD(+) + diphosphate. It participates in cofactor biosynthesis; NAD(+) biosynthesis; deamido-NAD(+) from nicotinate D-ribonucleotide: step 1/1. Its function is as follows. Catalyzes the reversible adenylation of nicotinate mononucleotide (NaMN) to nicotinic acid adenine dinucleotide (NaAD). This Saccharophagus degradans (strain 2-40 / ATCC 43961 / DSM 17024) protein is Probable nicotinate-nucleotide adenylyltransferase.